The primary structure comprises 519 residues: Cytochrome P450 709B1 (519 aa).

A helical transmembrane segment spans residues 1-21 (MGLVIFLALIVLILIIGLRIF). Residue cysteine 464 coordinates heme.

It belongs to the cytochrome P450 family. It depends on heme as a cofactor. As to expression, highly expressed in siliques.

Its subcellular location is the membrane. Functionally, involved in stress response. Does not function as cytokinin hydroxylase in yeast heterologous system. The protein is Cytochrome P450 709B1 of Arabidopsis thaliana (Mouse-ear cress).